The following is a 720-amino-acid chain: Polyribonucleotide nucleotidyltransferase (720 aa).

D487 and D493 together coordinate Mg(2+). Residues 554-613 form the KH domain; that stretch reads PRIETFKIPTDKIREVIGTGGKVIREIVEKTGAKVNIEDDGTVKVASSDGEAMKAAIKWI. Residues 623 to 691 enclose the S1 motif domain; sequence GQIYDGTVVK…DRGKTRLSMK (69 aa). The interval 699-720 is disordered; it reads EDLEAKDKVAEGEKAPREAAGE. Basic and acidic residues predominate over residues 701-720; the sequence is LEAKDKVAEGEKAPREAAGE.

It belongs to the polyribonucleotide nucleotidyltransferase family. It depends on Mg(2+) as a cofactor.

Its subcellular location is the cytoplasm. It carries out the reaction RNA(n+1) + phosphate = RNA(n) + a ribonucleoside 5'-diphosphate. Functionally, involved in mRNA degradation. Catalyzes the phosphorolysis of single-stranded polyribonucleotides processively in the 3'- to 5'-direction. This chain is Polyribonucleotide nucleotidyltransferase, found in Bradyrhizobium diazoefficiens (strain JCM 10833 / BCRC 13528 / IAM 13628 / NBRC 14792 / USDA 110).